Reading from the N-terminus, the 150-residue chain is MPFLLLALLVLAIDQLSKYMIRTNFQPNESLPVIGSFFHLTYVHNPGAAFGLLANKTQVFVGVTVLVAIIILAAYRYLPPDRPLLRLSLALMLGGALGNLIDRLRFGYVVDFLDLRIWPVFNLADMAIVFGVIILCWQLLLPAGEQGREP.

The next 2 membrane-spanning stretches (helical) occupy residues 59–79 and 84–101; these read VFVG…RYLP and LLRL…GNLI. Active-site residues include aspartate 111 and aspartate 125. Residues 117-137 form a helical membrane-spanning segment; that stretch reads IWPVFNLADMAIVFGVIILCW.

This sequence belongs to the peptidase A8 family.

The protein localises to the cell membrane. It carries out the reaction Release of signal peptides from bacterial membrane prolipoproteins. Hydrolyzes -Xaa-Yaa-Zaa-|-(S,diacylglyceryl)Cys-, in which Xaa is hydrophobic (preferably Leu), and Yaa (Ala or Ser) and Zaa (Gly or Ala) have small, neutral side chains.. It participates in protein modification; lipoprotein biosynthesis (signal peptide cleavage). Functionally, this protein specifically catalyzes the removal of signal peptides from prolipoproteins. This is Lipoprotein signal peptidase from Moorella thermoacetica (strain ATCC 39073 / JCM 9320).